The primary structure comprises 1201 residues: Autophagy-related protein 11 (1201 aa).

Residues 90–109 (FPFLGRPSTPTKGSDNSTGT) are disordered. Residues 97 to 109 (STPTKGSDNSTGT) are compositionally biased toward polar residues. Residues 418–452 (LLRSDDMVRSLRDEKSKLEEKVKGSESRIRKLEDL) are a coiled coil. 2 disordered regions span residues 458 to 503 (HMGR…SEEK) and 525 to 545 (KLQK…QEVQ). A compositionally biased stretch (low complexity) spans 485–499 (RRSSVSSRRMSSNQS). The segment covering 525–542 (KLQKDAHAERQSNTDKIQ) has biased composition (basic and acidic residues). Coiled-coil stretches lie at residues 566 to 670 (RRFL…ALQA) and 710 to 828 (SAKA…WKER). Disordered regions lie at residues 1052 to 1076 (SMNG…DDEN) and 1115 to 1201 (DARG…LQGP). Residues 1133–1166 (RTLSKSLDSRRNSSNSKKGPATPSQRGNDSTTDL) are compositionally biased toward polar residues. The segment covering 1191 to 1201 (EEVRRDQLQGP) has biased composition (basic and acidic residues).

Belongs to the ATG11 family. As to quaternary structure, homodimer and potential homooligomers.

It is found in the preautophagosomal structure membrane. Its function is as follows. Selective autophagy-specific protein required for pexophagy and mitophagy. In contrast to its Saccharomyces cerevisiae ATG11 ortholog, is not involved in non-selective autophagy nor in cytoplasm to vacuole transport (Cvt). In Aspergillus oryzae (strain ATCC 42149 / RIB 40) (Yellow koji mold), this protein is Autophagy-related protein 11.